A 394-amino-acid chain; its full sequence is E3 ubiquitin-protein ligase RNF149 (394 aa).

Residues 1-31 (MAARRRPAAGVGARDALAVLALALCTPGVGG) form the signal peptide. N-linked (GlcNAc...) asparagine glycans are attached at residues Asn51 and Asn141. In terms of domain architecture, PA spans 66–171 (SSLREERQGL…PKGREIFDLV (106 aa)). The helical transmembrane segment at 197–217 (VVFVAIAFITMMIISLAWLIF) threads the bilayer. Residues 265-306 (CAVCIENFKVKDVIRILPCKHIFHRICIDPWLLDHRTCPMCK) form an RING-type; atypical zinc finger. The disordered stretch occupies residues 321–394 (DTQELPTPEA…SEPQHGGSIC (74 aa)). Position 327 is a phosphothreonine (Thr327). N-linked (GlcNAc...) asparagine glycosylation is present at Asn339. Ser341 and Ser344 each carry phosphoserine. Positions 352–362 (SNLPSSSSSES) are enriched in low complexity.

The protein localises to the membrane. The enzyme catalyses S-ubiquitinyl-[E2 ubiquitin-conjugating enzyme]-L-cysteine + [acceptor protein]-L-lysine = [E2 ubiquitin-conjugating enzyme]-L-cysteine + N(6)-ubiquitinyl-[acceptor protein]-L-lysine.. The protein operates within protein modification; protein ubiquitination. Functionally, E3 ubiquitin-protein ligase. Ubiquitinates BRAF, inducing its proteasomal degradation. This Mus musculus (Mouse) protein is E3 ubiquitin-protein ligase RNF149 (Rnf149).